Consider the following 365-residue polypeptide: 2-aminoethylphosphonate--pyruvate transaminase (365 aa).

Lys-194 is modified (N6-(pyridoxal phosphate)lysine).

The protein belongs to the class-V pyridoxal-phosphate-dependent aminotransferase family. PhnW subfamily. Homodimer. The cofactor is pyridoxal 5'-phosphate.

The catalysed reaction is (2-aminoethyl)phosphonate + pyruvate = phosphonoacetaldehyde + L-alanine. Involved in phosphonate degradation. This is 2-aminoethylphosphonate--pyruvate transaminase from Bacillus cereus (strain ZK / E33L).